The sequence spans 799 residues: Elongation factor G, mitochondrial (799 aa).

A mitochondrion-targeting transit peptide spans Met-1–Phe-24. The tr-type G domain occupies Ser-97–Ser-384. GTP contacts are provided by residues Ala-106–Thr-113, Asp-182–His-186, and Asn-236–Asp-239.

This sequence belongs to the TRAFAC class translation factor GTPase superfamily. Classic translation factor GTPase family. EF-G/EF-2 subfamily.

The protein resides in the mitochondrion. The protein operates within protein biosynthesis; polypeptide chain elongation. Mitochondrial GTPase that catalyzes the GTP-dependent ribosomal translocation step during translation elongation. During this step, the ribosome changes from the pre-translocational (PRE) to the post-translocational (POST) state as the newly formed A-site-bound peptidyl-tRNA and P-site-bound deacylated tRNA move to the P and E sites, respectively. Catalyzes the coordinated movement of the two tRNA molecules, the mRNA and conformational changes in the ribosome. The polypeptide is Elongation factor G, mitochondrial (mef1) (Emericella nidulans (strain FGSC A4 / ATCC 38163 / CBS 112.46 / NRRL 194 / M139) (Aspergillus nidulans)).